The following is a 154-amino-acid chain: 6,7-dimethyl-8-ribityllumazine synthase (154 aa).

5-amino-6-(D-ribitylamino)uracil contacts are provided by residues F22, 56–58 (AFE), and 80–82 (AVI). 85–86 (AT) is a binding site for (2S)-2-hydroxy-3-oxobutyl phosphate. The active-site Proton donor is the H88. F113 serves as a coordination point for 5-amino-6-(D-ribitylamino)uracil. (2S)-2-hydroxy-3-oxobutyl phosphate is bound at residue R127.

This sequence belongs to the DMRL synthase family.

It catalyses the reaction (2S)-2-hydroxy-3-oxobutyl phosphate + 5-amino-6-(D-ribitylamino)uracil = 6,7-dimethyl-8-(1-D-ribityl)lumazine + phosphate + 2 H2O + H(+). The protein operates within cofactor biosynthesis; riboflavin biosynthesis; riboflavin from 2-hydroxy-3-oxobutyl phosphate and 5-amino-6-(D-ribitylamino)uracil: step 1/2. In terms of biological role, catalyzes the formation of 6,7-dimethyl-8-ribityllumazine by condensation of 5-amino-6-(D-ribitylamino)uracil with 3,4-dihydroxy-2-butanone 4-phosphate. This is the penultimate step in the biosynthesis of riboflavin. This is 6,7-dimethyl-8-ribityllumazine synthase from Clostridium botulinum (strain Okra / Type B1).